Consider the following 89-residue polypeptide: Small ribosomal subunit protein uS15 (89 aa).

This sequence belongs to the universal ribosomal protein uS15 family. In terms of assembly, part of the 30S ribosomal subunit. Forms a bridge to the 50S subunit in the 70S ribosome, contacting the 23S rRNA.

Functionally, one of the primary rRNA binding proteins, it binds directly to 16S rRNA where it helps nucleate assembly of the platform of the 30S subunit by binding and bridging several RNA helices of the 16S rRNA. In terms of biological role, forms an intersubunit bridge (bridge B4) with the 23S rRNA of the 50S subunit in the ribosome. This is Small ribosomal subunit protein uS15 from Bifidobacterium longum (strain DJO10A).